The primary structure comprises 92 residues: Putative pterin-4-alpha-carbinolamine dehydratase (92 aa).

It belongs to the pterin-4-alpha-carbinolamine dehydratase family.

It carries out the reaction (4aS,6R)-4a-hydroxy-L-erythro-5,6,7,8-tetrahydrobiopterin = (6R)-L-erythro-6,7-dihydrobiopterin + H2O. This Picosynechococcus sp. (strain ATCC 27264 / PCC 7002 / PR-6) (Agmenellum quadruplicatum) protein is Putative pterin-4-alpha-carbinolamine dehydratase.